A 385-amino-acid chain; its full sequence is GPN-loop GTPase 1 (385 aa).

13–18 (GSGKTT) contacts GTP. The short motif at 70–72 (GPN) is the Gly-Pro-Asn (GPN)-loop; involved in dimer interface element. Position 173-176 (173-176 (NKTD)) interacts with GTP. A phosphoserine mark is found at serine 304, serine 308, and serine 313. Acidic residues predominate over residues 317 to 332 (EDANDGLVDRDEDEGV). Positions 317–356 (EDANDGLVDRDEDEGVEREYTFPGEERTKGEVNENSAPDL) are disordered. A compositionally biased stretch (basic and acidic residues) spans 333–348 (EREYTFPGEERTKGEV). Serine 352 bears the Phosphoserine mark. A Glycyl lysine isopeptide (Lys-Gly) (interchain with G-Cter in ubiquitin) cross-link involves residue lysine 369.

It belongs to the GPN-loop GTPase family. Heterodimers with GPN2 or GPN3. Binds to RNA polymerase II (RNAPII) in a GTP-dependent manner. Interacts with nuclear pore protein NUP133 and nuclear export factor CRM1. Interacts with PCL1. Post-translationally, phosphorylated by the cyclin-CDK PCL1-PHO85.

Its subcellular location is the cytoplasm. In terms of biological role, small GTPase required for proper nuclear import of RNA polymerase II (RNAPII). May act at an RNAP assembly step prior to nuclear import. Promotes sister chromatid separation during anaphase. In Saccharomyces cerevisiae (strain ATCC 204508 / S288c) (Baker's yeast), this protein is GPN-loop GTPase 1.